A 91-amino-acid polypeptide reads, in one-letter code: Essential MCU regulator, mitochondrial (91 aa).

The helical transmembrane segment at 45-65 (VIPFGLLGVVLTVIPGLLIGA) threads the bilayer.

This sequence belongs to the SMDT1/EMRE family.

The protein resides in the mitochondrion inner membrane. Its function is as follows. Essential regulatory subunit of the mitochondrial calcium uniporter (mcu) channel, a protein that mediates calcium uptake into mitochondria. The sequence is that of Essential MCU regulator, mitochondrial from Aedes aegypti (Yellowfever mosquito).